The following is a 268-amino-acid chain: Glutamate racemase (268 aa).

Residues 9–10 and 41–42 each bind substrate; these read DS and YG. Residue C73 is the Proton donor/acceptor of the active site. 74–75 provides a ligand contact to substrate; the sequence is NS. Catalysis depends on C183, which acts as the Proton donor/acceptor. Position 184–185 (184–185) interacts with substrate; sequence TH.

The protein belongs to the aspartate/glutamate racemases family.

The catalysed reaction is L-glutamate = D-glutamate. The protein operates within cell wall biogenesis; peptidoglycan biosynthesis. Provides the (R)-glutamate required for cell wall biosynthesis. In Shewanella piezotolerans (strain WP3 / JCM 13877), this protein is Glutamate racemase.